A 661-amino-acid polypeptide reads, in one-letter code: UvrABC system protein B (661 aa).

The 387-residue stretch at 28–414 (DGVNERKRHQ…HTDEMVEQII (387 aa)) folds into the Helicase ATP-binding domain. 41-48 (GATGTGKT) serves as a coordination point for ATP. A Beta-hairpin motif is present at residues 94 to 117 (YYDYYQPEAYVPSTDTFIEKDASI). Residues 432–598 (QIDDLLSEIQ…TINKKIHDVI (167 aa)) enclose the Helicase C-terminal domain. A disordered region spans residues 603 to 624 (ESDETNQQQQTELPKKMTKKER). One can recognise a UVR domain in the interval 625-660 (QKTIENIEKEMKKAAKDLDFEKATELRDMLFELKAE).

This sequence belongs to the UvrB family. As to quaternary structure, forms a heterotetramer with UvrA during the search for lesions. Interacts with UvrC in an incision complex.

It localises to the cytoplasm. Its function is as follows. The UvrABC repair system catalyzes the recognition and processing of DNA lesions. A damage recognition complex composed of 2 UvrA and 2 UvrB subunits scans DNA for abnormalities. Upon binding of the UvrA(2)B(2) complex to a putative damaged site, the DNA wraps around one UvrB monomer. DNA wrap is dependent on ATP binding by UvrB and probably causes local melting of the DNA helix, facilitating insertion of UvrB beta-hairpin between the DNA strands. Then UvrB probes one DNA strand for the presence of a lesion. If a lesion is found the UvrA subunits dissociate and the UvrB-DNA preincision complex is formed. This complex is subsequently bound by UvrC and the second UvrB is released. If no lesion is found, the DNA wraps around the other UvrB subunit that will check the other stand for damage. This chain is UvrABC system protein B, found in Staphylococcus epidermidis (strain ATCC 12228 / FDA PCI 1200).